Consider the following 622-residue polypeptide: 1-deoxy-D-xylulose-5-phosphate synthase (622 aa).

Thiamine diphosphate-binding positions include histidine 80 and glycine 121–serine 123. Aspartate 152 is a binding site for Mg(2+). Thiamine diphosphate contacts are provided by residues glycine 153 to alanine 154, asparagine 181, tyrosine 288, and glutamate 370. Asparagine 181 contributes to the Mg(2+) binding site.

Belongs to the transketolase family. DXPS subfamily. In terms of assembly, homodimer. Mg(2+) serves as cofactor. The cofactor is thiamine diphosphate.

The enzyme catalyses D-glyceraldehyde 3-phosphate + pyruvate + H(+) = 1-deoxy-D-xylulose 5-phosphate + CO2. Its pathway is metabolic intermediate biosynthesis; 1-deoxy-D-xylulose 5-phosphate biosynthesis; 1-deoxy-D-xylulose 5-phosphate from D-glyceraldehyde 3-phosphate and pyruvate: step 1/1. Functionally, catalyzes the acyloin condensation reaction between C atoms 2 and 3 of pyruvate and glyceraldehyde 3-phosphate to yield 1-deoxy-D-xylulose-5-phosphate (DXP). This Shewanella amazonensis (strain ATCC BAA-1098 / SB2B) protein is 1-deoxy-D-xylulose-5-phosphate synthase.